A 174-amino-acid polypeptide reads, in one-letter code: UPF0340 protein SAB1998c (174 aa).

The protein belongs to the UPF0340 family.

In Staphylococcus aureus (strain bovine RF122 / ET3-1), this protein is UPF0340 protein SAB1998c.